The chain runs to 248 residues: MPGRSTSSSSSGSTGFISFSGVESALSSLKTFQSCISSGMDTASSVALDLVETQTEVSSEYSMDKAMVEFAMMDRELNHYLKAVQSTINHVKEERSEKIPDLKLLVEKKFLALQNKNSDADFQNNEKFVQFKQQLKELKKQYGLQSDREADITEGVDEDMIVTQSQTNFICPITQLEMKKPVKNKVCGHTYEEEAIVRMIESKHERKKKACCPKIGCSHVDMRMSDLIQDEALRRAIESHKKRRRQSN.

Position 1 is an N-acetylmethionine (methionine 1). Residues lysine 92 and lysine 109 each participate in a glycyl lysine isopeptide (Lys-Gly) (interchain with G-Cter in SUMO2) cross-link. A Phosphoserine modification is found at serine 118. Glycyl lysine isopeptide (Lys-Gly) (interchain with G-Cter in SUMO2) cross-links involve residues lysine 127 and lysine 132. The SP-RING-type zinc finger occupies 156-242 (VDEDMIVTQS…LRRAIESHKK (87 aa)). 4 residues coordinate Zn(2+): cysteine 187, histidine 189, cysteine 212, and cysteine 217.

The protein belongs to the NSE2 family. In terms of assembly, component of the SMC5-SMC6 complex which consists at least of SMC5, SMC6, NSMCE2, NSMCE1, NSMCE4A or EID3 and NSMCE3. Sumoylated, possibly via autosumoylation.

It localises to the nucleus. Its subcellular location is the chromosome. It is found in the telomere. The protein localises to the PML body. It functions in the pathway protein modification; protein sumoylation. Functionally, E3 SUMO-protein ligase component of the SMC5-SMC6 complex, a complex involved in DNA double-strand break repair by homologous recombination. Is not be required for the stability of the complex. The complex may promote sister chromatid homologous recombination by recruiting the SMC1-SMC3 cohesin complex to double-strand breaks. Acts as an E3 ligase mediating SUMO attachment to various proteins such as SMC6L1 and TSNAX, the shelterin complex subunits TERF1, TERF2, TINF2 and TERF2IP, RAD51AP1, and maybe the cohesin components RAD21 and STAG2. Required for recruitment of telomeres to PML nuclear bodies. Required for sister chromatid cohesion during prometaphase and mitotic progression. The protein is E3 SUMO-protein ligase NSE2 (NSMCE2) of Bos taurus (Bovine).